The chain runs to 414 residues: NADH-quinone oxidoreductase subunit D (414 aa).

This sequence belongs to the complex I 49 kDa subunit family. As to quaternary structure, NDH-1 is composed of 14 different subunits. Subunits NuoB, C, D, E, F, and G constitute the peripheral sector of the complex.

The protein localises to the cell inner membrane. The enzyme catalyses a quinone + NADH + 5 H(+)(in) = a quinol + NAD(+) + 4 H(+)(out). Its function is as follows. NDH-1 shuttles electrons from NADH, via FMN and iron-sulfur (Fe-S) centers, to quinones in the respiratory chain. The immediate electron acceptor for the enzyme in this species is believed to be ubiquinone. Couples the redox reaction to proton translocation (for every two electrons transferred, four hydrogen ions are translocated across the cytoplasmic membrane), and thus conserves the redox energy in a proton gradient. This is NADH-quinone oxidoreductase subunit D from Akkermansia muciniphila (strain ATCC BAA-835 / DSM 22959 / JCM 33894 / BCRC 81048 / CCUG 64013 / CIP 107961 / Muc).